The sequence spans 150 residues: Glycophorin-A (150 aa).

The N-terminal stretch at 1–19 is a signal peptide; that stretch reads MYGKIIFVLLLSEIVSISA. At 20-91 the chain is on the extracellular side; that stretch reads LSTTEVAMHT…QLAHHFSEPE (72 aa). Residue Ser21 is glycosylated (O-linked (GalNAc...) serine). 3 O-linked (GalNAc...) threonine glycosylation sites follow: Thr22, Thr23, and Thr29. An O-linked (GalNAc...) serine glycan is attached at Ser30. A glycan (O-linked (GalNAc...) threonine) is linked at Thr31. Ser32 carries O-linked (GalNAc...) serine glycosylation. O-linked (GalNAc...) threonine glycosylation is present at Thr36. 2 O-linked (GalNAc...) serine glycosylation sites follow: Ser38 and Ser41. An O-linked (GalNAc...) threonine glycan is attached at Thr44. N-linked (GlcNAc...) asparagine glycosylation occurs at Asn45. 2 O-linked (GalNAc...) threonine glycosylation sites follow: Thr52 and Thr56. 2 O-linked (GalNAc...) serine glycosylation sites follow: Ser63 and Ser66. The O-linked (GalNAc...) threonine glycan is linked to Thr69. The helical transmembrane segment at 92–114 threads the bilayer; it reads ITLIIFGVMAGVIGTILLISYGI. Residues 115 to 150 lie on the Cytoplasmic side of the membrane; that stretch reads RRLIKKSPSDVKPLPSPDTDVPLSSVEIENPETSDQ. A disordered region spans residues 121-150; that stretch reads SPSDVKPLPSPDTDVPLSSVEIENPETSDQ. Position 133 is a phosphothreonine (Thr133). Phosphoserine occurs at positions 138 and 148.

It belongs to the glycophorin A family. As to quaternary structure, homodimer. Component of the ankyrin-1 complex in the erythrocyte, composed of ANK1, RHCE, RHAG, SLC4A1, EPB42, GYPA, GYPB and AQP1. Interacts with SLC4A1; a GYPA monomer is bound at each end of the SLC4A1 dimer forming a heterotetramer. In terms of assembly, (Microbial infection) Interacts with Streptococcus gordonii hsa protein. (Microbial infection) Interacts (in a sialic acid-independent manner) with P.falciparum MSP1 subunit p83. Post-translationally, the major O-linked glycan are NeuAc-alpha-(2-3)-Gal-beta-(1-3)-[NeuAc-alpha-(2-6)]-GalNAcOH (about 78 %) and NeuAc-alpha-(2-3)-Gal-beta-(1-3)-GalNAcOH (17 %). Minor O-glycans (5 %) include NeuAc-alpha-(2-3)-Gal-beta-(1-3)-[NeuAc-alpha-(2-6)]-GalNAcOH NeuAc-alpha-(2-8)-NeuAc-alpha-(2-3)-Gal-beta-(1-3)-GalNAcOH. About 1% of all O-linked glycans carry blood group A, B and H determinants. They derive from a type-2 precursor core structure, Gal-beta-(1,3)-GlcNAc-beta-1-R, and the antigens are synthesized by addition of fucose (H antigen-specific) and then N-acetylgalactosamine (A antigen-specific) or galactose (B antigen-specific). Specifically O-linked-glycans are NeuAc-alpha-(2-3)-Gal-beta-(1-3)-GalNAcOH-(6-1)-GlcNAc-beta-(4-1)-[Fuc-alpha-(1-2)]-Gal-beta-(3-1)-GalNAc-alpha (about 1%, B antigen-specific) and NeuAc-alpha-(2-3)-Gal-beta-(1-3)-GalNAcOH-(6-1)-GlcNAc-beta-(4-1)-[Fuc-alpha-(1-2)]-Gal-beta (1 %, O antigen-, A antigen- and B antigen-specific).

The protein localises to the cell membrane. Component of the ankyrin-1 complex, a multiprotein complex involved in the stability and shape of the erythrocyte membrane. Glycophorin A is the major intrinsic membrane protein of the erythrocyte. The N-terminal glycosylated segment, which lies outside the erythrocyte membrane, has MN blood group receptors. Appears to be important for the function of SLC4A1 and is required for high activity of SLC4A1. May be involved in translocation of SLC4A1 to the plasma membrane. Its function is as follows. (Microbial infection) Appears to be a receptor for Hepatitis A virus (HAV). Functionally, (Microbial infection) Receptor for P.falciparum erythrocyte-binding antigen 175 (EBA-175); binding of EBA-175 is dependent on sialic acid residues of the O-linked glycans. The chain is Glycophorin-A from Homo sapiens (Human).